The chain runs to 325 residues: DNA-directed RNA polymerase subunit alpha (325 aa).

Residues 1–231 (MQNSLLKPRI…DQLNVFAALE (231 aa)) are alpha N-terminal domain (alpha-NTD). The interval 246 to 325 (VDPILLRPVD…ENWPPAGLEK (80 aa)) is alpha C-terminal domain (alpha-CTD).

The protein belongs to the RNA polymerase alpha chain family. In terms of assembly, homodimer. The RNAP catalytic core consists of 2 alpha, 1 beta, 1 beta' and 1 omega subunit. When a sigma factor is associated with the core the holoenzyme is formed, which can initiate transcription.

The enzyme catalyses RNA(n) + a ribonucleoside 5'-triphosphate = RNA(n+1) + diphosphate. Its function is as follows. DNA-dependent RNA polymerase catalyzes the transcription of DNA into RNA using the four ribonucleoside triphosphates as substrates. This is DNA-directed RNA polymerase subunit alpha from Herminiimonas arsenicoxydans.